The primary structure comprises 974 residues: Translation initiation factor IF-2 (974 aa).

Residues 31-376 are disordered; it reads FVKSASSTVE…APAVGGVRLP (346 aa). Residues 52 to 68 show a composition bias toward low complexity; that stretch reads PSAKSADSAARPAAKPG. Over residues 83 to 96 the composition is skewed to pro residues; that stretch reads GPRPGPKPAAPAPA. Residues 97-133 are compositionally biased toward low complexity; sequence APAAAAPAATPAAQAPAPAAPAASTATPAAPASNAPK. Pro residues predominate over residues 134–147; sequence PGRPTPAAPAPAAP. Composition is skewed to low complexity over residues 148–166 and 179–191; these read AAPAAPAAASTPAAPSTGA and RVGNNPYSSAPAE. Pro residues-rich tracts occupy residues 195–210 and 253–266; these read PRPAPGAPRPGAPRPA and RPSPGSMPPRPNPG. Residues 267 to 277 are compositionally biased toward low complexity; it reads AMPARSARPAP. A compositionally biased stretch (gly residues) spans 279 to 332; that stretch reads GRPGRPGGAPGGRPGGGGGGYRGGGAPGAGAGAPGGGAPAGGFRGRPGGGGRPG. Residues 349-358 show a composition bias toward basic residues; the sequence is RRGRKSKRQK. One can recognise a tr-type G domain in the interval 470–641; it reads SRPPVVTVMG…AVLLTADAAL (172 aa). Residues 479-486 form a G1 region; the sequence is GHVDHGKT. 479–486 lines the GTP pocket; sequence GHVDHGKT. The interval 504 to 508 is G2; sequence GITQH. Residues 529 to 532 form a G3 region; it reads DTPG. GTP contacts are provided by residues 529–533 and 583–586; these read DTPGH and NKID. The G4 stretch occupies residues 583-586; that stretch reads NKID. Residues 619 to 621 form a G5 region; it reads SAK.

Belongs to the TRAFAC class translation factor GTPase superfamily. Classic translation factor GTPase family. IF-2 subfamily.

The protein localises to the cytoplasm. One of the essential components for the initiation of protein synthesis. Protects formylmethionyl-tRNA from spontaneous hydrolysis and promotes its binding to the 30S ribosomal subunits. Also involved in the hydrolysis of GTP during the formation of the 70S ribosomal complex. This is Translation initiation factor IF-2 from Rhodococcus opacus (strain B4).